Consider the following 366-residue polypeptide: GTP cyclohydrolase 1 type 2 homolog (366 aa).

Residues His-64, His-65, Asp-102, His-326, and Glu-329 each coordinate Zn(2+).

Belongs to the GTP cyclohydrolase I type 2/NIF3 family. Toroid-shaped homohexamer that has a central cavity of about 38 Angstroms diameter.

The protein is GTP cyclohydrolase 1 type 2 homolog of Staphylococcus aureus (strain Mu50 / ATCC 700699).